The primary structure comprises 450 residues: Phosphoglucosamine mutase (450 aa).

Residue S102 is the Phosphoserine intermediate of the active site. S102, D243, D245, and D247 together coordinate Mg(2+). A Phosphoserine modification is found at S102.

This sequence belongs to the phosphohexose mutase family. The cofactor is Mg(2+). Activated by phosphorylation.

It carries out the reaction alpha-D-glucosamine 1-phosphate = D-glucosamine 6-phosphate. In terms of biological role, catalyzes the conversion of glucosamine-6-phosphate to glucosamine-1-phosphate. The protein is Phosphoglucosamine mutase of Rhizobium meliloti (strain 1021) (Ensifer meliloti).